The primary structure comprises 1407 residues: YEATS domain-containing protein 2 (1407 aa).

Residue Lys9 forms a Glycyl lysine isopeptide (Lys-Gly) (interchain with G-Cter in SUMO2) linkage. Residues 54-80 (MKNKEHEIDVIDQRLIEARRMMDKLRA) are a coiled coil. Residue Lys113 forms a Glycyl lysine isopeptide (Lys-Gly) (interchain with G-Cter in SUMO2) linkage. The tract at residues 116 to 196 (LESPSRSSSP…SHKRELRNAD (81 aa)) is disordered. Ser118, Ser120, and Ser157 each carry phosphoserine. A compositionally biased stretch (polar residues) spans 119-148 (PSRSSSPTNQRSETPSANHSESDSLSQHND). Positions 149–165 (FLSDKDNNSNVDVEERP) are enriched in basic and acidic residues. Lys189 participates in a covalent cross-link: Glycyl lysine isopeptide (Lys-Gly) (interchain with G-Cter in SUMO2). One can recognise a YEATS domain in the interval 201–346 (ETSRLFVKKT…EDSVYPQSSE (146 aa)). 2 histone H3K27cr binding regions span residues 260–262 (HPS) and 283–285 (WGE). Thr406 is subject to Phosphothreonine. Residues Ser446, Ser462, Ser464, Ser470, and Ser472 each carry the phosphoserine modification. Residues 462–540 (SGSPISTPSP…GTGSPIPKIH (79 aa)) are disordered. Thr477 bears the Phosphothreonine mark. Lys486 participates in a covalent cross-link: Glycyl lysine isopeptide (Lys-Gly) (interchain with G-Cter in SUMO2). The segment covering 511–520 (STPSTGSPTS) has biased composition (low complexity). Position 534 is a phosphoserine (Ser534). Residue Lys550 forms a Glycyl lysine isopeptide (Lys-Gly) (interchain with G-Cter in SUMO2) linkage. Ser573 is modified (phosphoserine). Lys590 is covalently cross-linked (Glycyl lysine isopeptide (Lys-Gly) (interchain with G-Cter in SUMO2)). Ser625 is subject to Phosphoserine. Glycyl lysine isopeptide (Lys-Gly) (interchain with G-Cter in SUMO2) cross-links involve residues Lys647 and Lys771. A disordered region spans residues 791 to 833 (SGSAAAGGSGSSGAGGGSGGGGGSGAGGTPSTSGPGGGPQHLT). Gly residues predominate over residues 795–829 (AAGGSGSSGAGGGSGGGGGSGAGGTPSTSGPGGGP). Residue Lys908 forms a Glycyl lysine isopeptide (Lys-Gly) (interchain with G-Cter in SUMO2) linkage. Lys1095 is covalently cross-linked (Glycyl lysine isopeptide (Lys-Gly) (interchain with G-Cter in SUMO1); alternate). A Glycyl lysine isopeptide (Lys-Gly) (interchain with G-Cter in SUMO2); alternate cross-link involves residue Lys1095. Lys1115 participates in a covalent cross-link: Glycyl lysine isopeptide (Lys-Gly) (interchain with G-Cter in SUMO2). Thr1204 bears the Phosphothreonine mark. Residues Lys1207 and Lys1270 each participate in a glycyl lysine isopeptide (Lys-Gly) (interchain with G-Cter in SUMO2) cross-link.

As to quaternary structure, component of the ADA2A-containing complex (ATAC), composed of KAT14, KAT2A, TADA2L, TADA3L, ZZ3, MBIP, WDR5, YEATS2, SGF29 and DR1.

The protein resides in the nucleus. In terms of biological role, chromatin reader component of the ATAC complex, a complex with histone acetyltransferase activity on histones H3 and H4. YEATS2 specifically recognizes and binds histone H3 crotonylated at 'Lys-27' (H3K27cr). Crotonylation marks active promoters and enhancers and confers resistance to transcriptional repressors. This is YEATS domain-containing protein 2 from Mus musculus (Mouse).